The following is a 797-amino-acid chain: N-acetylneuraminate (7)9-O-acetyltransferase (797 aa).

Residues 1–18 (MAALAYNLGKREINHYFS) are Cytoplasmic-facing. Residues 19 to 39 (VRSAKVLALVAVLLLAACHLA) form a helical membrane-spanning segment. The Lumenal portion of the chain corresponds to 40–313 (SRRYRGNDSC…QPRPPLTLIQ (274 aa)). A glycan (N-linked (GlcNAc...) asparagine) is linked at N46. S94 (acyl-ester intermediate) is an active-site residue. N-linked (GlcNAc...) asparagine glycans are attached at residues N175 and N187. Catalysis depends on residues D270 and H273. A helical membrane pass occupies residues 314-334 (KLAACFFTLSIIGYFIFYVIH). The Cytoplasmic segment spans residues 335–363 (RNAHRKNKPCTDLESGEEKKNIINTPVSS). A helical transmembrane segment spans residues 364–384 (LEILLQSFCKLGLIMAYFYMC). Topologically, residues 385-395 (DRANLFMKENK) are lumenal. The chain crosses the membrane as a helical span at residues 396 to 416 (FYTHSSFFIPIIYILVLGVFY). Topologically, residues 417 to 439 (NENTKETKVLNREQTDEWKGWMQ) are cytoplasmic. The helical transmembrane segment at 440-460 (LVILIYHISGASTFLPVYMHI) threads the bilayer. A topological domain (lumenal) is located at residue R461. The helical transmembrane segment at 462–482 (VLVAAYLFQTGYGHFSYFWIK) threads the bilayer. Residues 483 to 486 (GDFG) are Cytoplasmic-facing. The chain crosses the membrane as a helical span at residues 487 to 507 (IHRVCQVLFRLNFLVVVLCIV). The Lumenal segment spans residues 508–513 (MDRPYQ). Residues 514–534 (FYYFVPLVTVWFMVIYVTLAL) form a helical membrane-spanning segment. Over 535-546 (WPQITQKKANGN) the chain is Cytoplasmic. Residues 547–567 (FFWYLGLLLKLGLLLLCIWFL) form a helical membrane-spanning segment. Over 568–599 (AYSQGAFEKIFSLWPLSKCFELEGSVYEWWFR) the chain is Lumenal. A helical transmembrane segment spans residues 600–620 (WRLDRYVVFHGVLFAFIYLAL). Residues 621–638 (QRRQILSEGKGEPLFSNK) are Cytoplasmic-facing. The helical transmembrane segment at 639-659 (ISNFLLFVSVVSFLTYSIWAS) threads the bilayer. Topologically, residues 660 to 671 (SCKNKAECNELH) are lumenal. A helical membrane pass occupies residues 672 to 692 (PSVSVVQIVAFILIRNIPGYA). The Cytoplasmic portion of the chain corresponds to 693–698 (RSIYSS). The helical transmembrane segment at 699-719 (FFAWFGKISLELFICQYHIWL) threads the bilayer. At 720-725 (AADTRG) the chain is on the lumenal side. The helical transmembrane segment at 726–746 (ILVLIPGNPTLNIIVSTFIFV) threads the bilayer. Residues 747 to 770 (CVAHEISQITTDLAQVVIPKDNPS) are Cytoplasmic-facing. The helical transmembrane segment at 771-791 (LFRRLACTIAFFGGVLILSSI) threads the bilayer. At 792–797 (QDKSRL) the chain is on the lumenal side.

The protein belongs to the PC-esterase family. CASD1 subfamily. In terms of processing, N-glycosylated. As to expression, ubiquitously expressed.

The protein resides in the golgi apparatus membrane. The catalysed reaction is CMP-N-acetyl-beta-neuraminate + acetyl-CoA = CMP-N-acetyl-9-O-acetyl-beta-neuraminate + CoA. It catalyses the reaction a ganglioside GD3 (d18:1(4E)) + acetyl-CoA = a ganglioside Ac-O-7-GD3(d18:1(4E)) + CoA. It carries out the reaction CMP-N-acetyl-beta-neuraminate + acetyl-CoA = CMP-N-acetyl-7-O-acetyl-beta-neuraminate + CoA. Key enzyme in the biosynthesis of O-acetylated (O-Ac) sialoglycans such as gangliosides O-AcGD3 and O-AcGD2, which affect various processes such as cell-cell interactions, host-pathogen recognition. Catalyzes the transfer of an acetyl group from a donor, the acetyl-coenzyme-A molecule (acetyl-CoA), to the C7/8/9 OH-position of a sialic acid residue. The primary site of O-acetyl group transfer on sialic acid seems to depend on cell type and can be C7, from which the O-acetyl group could subsequently migrate to the C8 and then to the C9 position, or at C9 with possibility of migrating to the C8 and then to the C7 position. Together with ST8SIA1 (GD3 synthase) it increases the levels of ganglioside Ac-O-7-GD3. Can transfer the acetyl group from acetyl-CoA to free sialate (N-acetylneuraminate, Neu5Ac) in vitro, but has preferred substrate specificity for CMP-activated sialate (CMP-Neu5Ac), resulting in the formation of 9-O-acetylated CMP-Neu5Ac (CMP-Neu5,9Ac2). CMP-Neu5,9Ac2 may be used by sialyltransferases as a sialate donor for glycoconjugate acceptors such as ganglioside GD3. O-acetylation at position C9 of ganglioside GD3 can counteract the pro-apoptotic effects of the ganglioside GD3 in tumor cells. The sequence is that of N-acetylneuraminate (7)9-O-acetyltransferase from Mus musculus (Mouse).